The following is a 378-amino-acid chain: Erythronate-4-phosphate dehydrogenase (378 aa).

Substrate contacts are provided by S45 and T66. Residues D146 and T175 each coordinate NAD(+). R208 is an active-site residue. D232 serves as a coordination point for NAD(+). Residue E237 is part of the active site. H254 serves as the catalytic Proton donor. Residue G257 coordinates NAD(+). Residue Y258 participates in substrate binding.

This sequence belongs to the D-isomer specific 2-hydroxyacid dehydrogenase family. PdxB subfamily. Homodimer.

Its subcellular location is the cytoplasm. It carries out the reaction 4-phospho-D-erythronate + NAD(+) = (R)-3-hydroxy-2-oxo-4-phosphooxybutanoate + NADH + H(+). It functions in the pathway cofactor biosynthesis; pyridoxine 5'-phosphate biosynthesis; pyridoxine 5'-phosphate from D-erythrose 4-phosphate: step 2/5. Functionally, catalyzes the oxidation of erythronate-4-phosphate to 3-hydroxy-2-oxo-4-phosphonooxybutanoate. The protein is Erythronate-4-phosphate dehydrogenase of Escherichia fergusonii (strain ATCC 35469 / DSM 13698 / CCUG 18766 / IAM 14443 / JCM 21226 / LMG 7866 / NBRC 102419 / NCTC 12128 / CDC 0568-73).